The primary structure comprises 24 residues: Poly-His-poly-Gly peptide 1 (24 aa).

The span at 1–13 (EDDHHHHHHHHHG) shows a compositional bias: basic residues. Residues 1 to 24 (EDDHHHHHHHHHGVGGGGGGGGGG) form a disordered region. Gly residues predominate over residues 14-24 (VGGGGGGGGGG).

In terms of tissue distribution, expressed by the venom gland.

It localises to the secreted. In terms of biological role, may serve as a metalloproteinase inhibitor during glandular storage. Their inhibition may be instantly disengaged, by dilution or physiochemical change, when venom is injected into tissue of the victim. This is Poly-His-poly-Gly peptide 1 from Atheris chlorechis (Western bush viper).